The sequence spans 185 residues: Large ribosomal subunit protein uL22 (185 aa).

This sequence belongs to the universal ribosomal protein uL22 family. In terms of assembly, part of the 50S ribosomal subunit.

Its function is as follows. This protein binds specifically to 23S rRNA. It makes multiple contacts with different domains of the 23S rRNA in the assembled 50S subunit and ribosome. Functionally, the globular domain of the protein is located near the polypeptide exit tunnel on the outside of the subunit, while an extended beta-hairpin is found that lines the wall of the exit tunnel in the center of the 70S ribosome. The polypeptide is Large ribosomal subunit protein uL22 (Pyrobaculum neutrophilum (strain DSM 2338 / JCM 9278 / NBRC 100436 / V24Sta) (Thermoproteus neutrophilus)).